The chain runs to 236 residues: Probable metal transport system ATP-binding protein TC_0697 (236 aa).

The ABC transporter domain occupies 5–236 (LILENVSFRY…FCCNTFGKCS (232 aa)). 39–46 (GPNGGGKT) is a binding site for ATP.

This sequence belongs to the ABC transporter superfamily.

It is found in the cell inner membrane. Part of an ATP-driven transport system TC_0696/TC_0697/TC_0698 for a metal. Probably responsible for energy coupling to the transport system. In Chlamydia muridarum (strain MoPn / Nigg), this protein is Probable metal transport system ATP-binding protein TC_0697.